A 219-amino-acid polypeptide reads, in one-letter code: Large ribosomal subunit protein uL3 (219 aa).

Gln151 carries the post-translational modification N5-methylglutamine.

This sequence belongs to the universal ribosomal protein uL3 family. As to quaternary structure, part of the 50S ribosomal subunit. Forms a cluster with proteins L14 and L19. Post-translationally, methylated by PrmB.

One of the primary rRNA binding proteins, it binds directly near the 3'-end of the 23S rRNA, where it nucleates assembly of the 50S subunit. The chain is Large ribosomal subunit protein uL3 from Blochmanniella floridana.